The chain runs to 449 residues: UDP-glycosyltransferase 76E7 (449 aa).

UDP-alpha-D-glucose-binding positions include Ser275, 333–335, 350–358, and 372–375; these read APQ, HCGWNSTLE, and TTDQ.

This sequence belongs to the UDP-glycosyltransferase family.

The protein is UDP-glycosyltransferase 76E7 (UGT76E7) of Arabidopsis thaliana (Mouse-ear cress).